Consider the following 417-residue polypeptide: Serine hydroxymethyltransferase (417 aa).

Residues Leu-121 and 125–127 (GHL) each bind (6S)-5,6,7,8-tetrahydrofolate. Lys-229 bears the N6-(pyridoxal phosphate)lysine mark. Residue 355–357 (SPF) participates in (6S)-5,6,7,8-tetrahydrofolate binding.

It belongs to the SHMT family. In terms of assembly, homodimer. Requires pyridoxal 5'-phosphate as cofactor.

It is found in the cytoplasm. The enzyme catalyses (6R)-5,10-methylene-5,6,7,8-tetrahydrofolate + glycine + H2O = (6S)-5,6,7,8-tetrahydrofolate + L-serine. It functions in the pathway one-carbon metabolism; tetrahydrofolate interconversion. The protein operates within amino-acid biosynthesis; glycine biosynthesis; glycine from L-serine: step 1/1. In terms of biological role, catalyzes the reversible interconversion of serine and glycine with tetrahydrofolate (THF) serving as the one-carbon carrier. This reaction serves as the major source of one-carbon groups required for the biosynthesis of purines, thymidylate, methionine, and other important biomolecules. Also exhibits THF-independent aldolase activity toward beta-hydroxyamino acids, producing glycine and aldehydes, via a retro-aldol mechanism. In Salmonella paratyphi C (strain RKS4594), this protein is Serine hydroxymethyltransferase.